The following is a 622-amino-acid chain: Cilia- and flagella-associated protein 206 (622 aa).

It belongs to the CFAP206 family.

The protein resides in the cytoplasm. It is found in the cytoskeleton. It localises to the cilium axoneme. Its subcellular location is the cilium basal body. Functionally, essential for sperm motility and is involved in the regulation of the beating frequency of motile cilia on the epithelial cells of the respiratory tract. Required for the establishment of radial spokes in sperm flagella. This chain is Cilia- and flagella-associated protein 206, found in Rattus norvegicus (Rat).